The primary structure comprises 437 residues: Probable glycine dehydrogenase (decarboxylating) subunit 1 (437 aa).

This sequence belongs to the GcvP family. N-terminal subunit subfamily. As to quaternary structure, the glycine cleavage system is composed of four proteins: P, T, L and H. In this organism, the P 'protein' is a heterodimer of two subunits.

It carries out the reaction N(6)-[(R)-lipoyl]-L-lysyl-[glycine-cleavage complex H protein] + glycine + H(+) = N(6)-[(R)-S(8)-aminomethyldihydrolipoyl]-L-lysyl-[glycine-cleavage complex H protein] + CO2. Functionally, the glycine cleavage system catalyzes the degradation of glycine. The P protein binds the alpha-amino group of glycine through its pyridoxal phosphate cofactor; CO(2) is released and the remaining methylamine moiety is then transferred to the lipoamide cofactor of the H protein. The chain is Probable glycine dehydrogenase (decarboxylating) subunit 1 from Thermotoga petrophila (strain ATCC BAA-488 / DSM 13995 / JCM 10881 / RKU-1).